Reading from the N-terminus, the 729-residue chain is MSDMQISGYQSAINARHYIQFAGGGRGPGNPGGGRGPGNPGGGRGPGSPGGGRGPGSPGGGRGPGSPGGGRGPGNPGGGRGPGGGRGGGRGGDGRRRDESFVENEGGRGNRSGRTTSTATTARTPGGLARPTTTVRAPVRPKGPIALPVTMTVREFSEATGVGASEILKALLKAGVVANINQQIDYETAAVIAADFGIETVEYVPPQLEGVVENIRDVLAAQDPKDMKPRPPVVTIMGHVDHGKTKLLDAIRSTRVAESEAGGITQHIGAYQVELHGRKITFLDTPGHEAFTAMRARGAQVTDIVVLVVAADDGVMPQTLEAISHVKAAGVPMIVAINKIDAPNANPDRVRQQLANAGVIVEQFGGDVPSVEVSAKLKKNIDGLLEIILLVADLNEYKANPNAPAVGTIIEAEMDRTRGPVATVLVQNGTLRLEDNVLVGSTTGTIRTMFNDAGKRLRFAEPATPVVILGLHDVPQAGDILQVMPDLAVAREIALQRQRKQRLEAMATSRGVSLDGLFSSIQQGKIKELNIILKADVQGSIGAIEHALSQLNTDEVQIRIIHRGTGTITESDVNLAIASHAIIIGFNARPDPAARRQAEQYGVDIRFYNIIYQLTEDIKKAMIGMLEPEYREVTEGFAEVRNTFRLPTREIVAGLYVTEGKISRQYNVRVLRNGVVLHDGKIASLKRFKDDVREVQAGYECGLIVEGFNDITPGDTMEFYRRERVERTV.

The interval 20–141 (QFAGGGRGPG…TTTVRAPVRP (122 aa)) is disordered. Gly residues predominate over residues 22–91 (AGGGRGPGNP…PGGGRGGGRG (70 aa)). Positions 92–108 (GDGRRRDESFVENEGGR) are enriched in basic and acidic residues. A compositionally biased stretch (low complexity) spans 112–127 (SGRTTSTATTARTPGG). A tr-type G domain is found at 229–396 (PRPPVVTIMG…IILLVADLNE (168 aa)). The tract at residues 238–245 (GHVDHGKT) is G1. Position 238–245 (238–245 (GHVDHGKT)) interacts with GTP. The interval 263–267 (GITQH) is G2. A G3 region spans residues 284 to 287 (DTPG). GTP is bound by residues 284 to 288 (DTPGH) and 338 to 341 (NKID). The G4 stretch occupies residues 338–341 (NKID). The tract at residues 374-376 (SAK) is G5.

Belongs to the TRAFAC class translation factor GTPase superfamily. Classic translation factor GTPase family. IF-2 subfamily.

It is found in the cytoplasm. Functionally, one of the essential components for the initiation of protein synthesis. Protects formylmethionyl-tRNA from spontaneous hydrolysis and promotes its binding to the 30S ribosomal subunits. Also involved in the hydrolysis of GTP during the formation of the 70S ribosomal complex. This Roseiflexus sp. (strain RS-1) protein is Translation initiation factor IF-2.